Consider the following 548-residue polypeptide: MAAKDVKFGNDARVKMLRGVNVLADAVKVTLGPKGRNVVLDKSFGAPTITKDGVSVAREIELEDKFENMGAQMVKEVASKANDAAGDGTTTATVLAQAIVNEGLKAVAAGMNPMDLKRGIDKAVIAAVEELKALSVPCSDSKAIAQVGTISANSDETVGKLIAEAMDKVGKEGVITVEDGTGLEDELDVVEGMQFDRGYLSPYFINKPDTGAVELESPFILLADKKISNIREMLPVLEAVAKAGKPLVIIAEDVEGEALATLVVNTMRGIVKVAAVKAPGFGDRRKAMLQDIATLTGGTVISEEIGMELEKATLEDLGQAKRVVINKDTTTIIDGVGEESAIQGRVAQIRKQIEEATSDYDREKLQERVAKLAGGVAVIKVGAATEVEMKEKKARVDDALHATRAAVEEGVVAGGGVALVRVAAKLAGLTGQNEDQNVGIKVALRAMEAPLRQIVSNAGEEPSVVANNVKAGDGNYGYNAATEEYGNMIDFGILDPTKVTRSALQYAASVAGLMITTECMVTDLPKGDAPDLGAAGGMGGMGGMGGMM.

Residues 30–33, K51, 87–91, G415, 479–481, and D495 contribute to the ATP site; these read TLGP, DGTTT, and NAA.

This sequence belongs to the chaperonin (HSP60) family. Forms a cylinder of 14 subunits composed of two heptameric rings stacked back-to-back. Interacts with the co-chaperonin GroES.

Its subcellular location is the cytoplasm. It catalyses the reaction ATP + H2O + a folded polypeptide = ADP + phosphate + an unfolded polypeptide.. In terms of biological role, together with its co-chaperonin GroES, plays an essential role in assisting protein folding. The GroEL-GroES system forms a nano-cage that allows encapsulation of the non-native substrate proteins and provides a physical environment optimized to promote and accelerate protein folding. This Klebsiella pneumoniae (strain 342) protein is Chaperonin GroEL.